The chain runs to 352 residues: Transcription factor RSL2 (352 aa).

A compositionally biased stretch (polar residues) spans 160–169 (SVTTTKSLTG). Residues 160–277 (SVTTTKSLTG…ASRGAATDPQ (118 aa)) form a disordered region. Residues 183–192 (KRARVNKRAQ) show a composition bias toward basic residues. The segment covering 223–232 (SRQNSSTTFC) has biased composition (polar residues). A basic motif region spans residues 272–285 (AATDPQSLYARKRR). Residues 272–321 (AATDPQSLYARKRRERINERLRILQNLVPNGTKVDISTMLEEAVHYVKFL) form the bHLH domain. Residues 286 to 321 (ERINERLRILQNLVPNGTKVDISTMLEEAVHYVKFL) are helix-loop-helix motif.

As to quaternary structure, homodimer. As to expression, expressed in roots. Expressed in root epidermal hair cells.

It is found in the nucleus. Transcription factor involved in the regulation of root hair elongation. Does not seem to be a direct transcriptional target of RHD6 and RSL1. Involved in the regulation of root hair elongation in response to low phosphate. In Arabidopsis thaliana (Mouse-ear cress), this protein is Transcription factor RSL2.